The primary structure comprises 465 residues: CUGBP Elav-like family member 3 (465 aa).

RRM domains lie at 7–88 (IKLF…PADS) and 95–175 (RKLF…FADT). Over residues 346-359 (PPALVAQQPPPPPQ) the composition is skewed to pro residues. The interval 346 to 379 (PPALVAQQPPPPPQQQQQQQQQQQQQQQREGPDG) is disordered. The segment covering 360-373 (QQQQQQQQQQQQQQ) has biased composition (low complexity). The 79-residue stretch at 380–458 (CNIFIYHLPQ…KRLKVQLKRP (79 aa)) folds into the RRM 3 domain.

Belongs to the CELF/BRUNOL family. As to expression, expressed in brain.

The protein resides in the nucleus. It localises to the cytoplasm. RNA-binding protein involved in the regulation of pre-mRNA alternative splicing. Mediates exon inclusion and/or exclusion in pre-mRNA that are subject to tissue-specific and developmentally regulated alternative splicing. Specifically activates exon 5 inclusion of cardiac isoforms of TNNT2 during heart remodeling at the juvenile to adult transition. Activates the splicing of MAPT/Tau exon 10. Binds to muscle-specific splicing enhancer (MSE) intronic sites flanking the alternative exon 5 of TNNT2 pre-mRNA. The protein is CUGBP Elav-like family member 3 (CELF3) of Homo sapiens (Human).